The sequence spans 358 residues: Protein-glutamate methylesterase/protein-glutamine glutaminase 1 (358 aa).

One can recognise a Response regulatory domain in the interval 7-124 (SVLLVDDSAV…KNFLIDSAAE (118 aa)). Asp58 is modified (4-aspartylphosphate). In terms of domain architecture, CheB-type methylesterase spans 170 to 358 (AQTTERIVAI…QEIHQAILHR (189 aa)). Catalysis depends on residues Ser182, His208, and Asp304.

Belongs to the CheB family. Post-translationally, phosphorylated by CheA. Phosphorylation of the N-terminal regulatory domain activates the methylesterase activity.

The protein localises to the cytoplasm. The catalysed reaction is [protein]-L-glutamate 5-O-methyl ester + H2O = L-glutamyl-[protein] + methanol + H(+). It carries out the reaction L-glutaminyl-[protein] + H2O = L-glutamyl-[protein] + NH4(+). Functionally, involved in chemotaxis. Part of a chemotaxis signal transduction system that modulates chemotaxis in response to various stimuli. Catalyzes the demethylation of specific methylglutamate residues introduced into the chemoreceptors (methyl-accepting chemotaxis proteins or MCP) by CheR. Also mediates the irreversible deamidation of specific glutamine residues to glutamic acid. The polypeptide is Protein-glutamate methylesterase/protein-glutamine glutaminase 1 (Pseudomonas savastanoi pv. phaseolicola (strain 1448A / Race 6) (Pseudomonas syringae pv. phaseolicola (strain 1448A / Race 6))).